The following is a 657-amino-acid chain: Chemoreceptor McpA (657 aa).

Topologically, residues Met-1–Arg-5 are cytoplasmic. Residues Leu-6–Met-29 traverse the membrane as a helical segment. The Periplasmic portion of the chain corresponds to Ala-30–Gln-188. Residues Ala-189–Phe-212 traverse the membrane as a helical segment. At Leu-213–Phe-657 the chain is on the cytoplasmic side. 2 consecutive HAMP domains span residues Met-216–Gln-269 and Gln-297–Lys-349. One can recognise a Methyl-accepting transducer domain in the interval Ser-354–Lys-583. A Glutamate methyl ester (Gln) modification is found at Gln-378. Glutamate methyl ester (Glu) is present on residues Glu-385 and Glu-392. The residue at position 574 (Gln-574) is a Glutamate methyl ester (Gln). The disordered stretch occupies residues Ala-634 to Phe-657.

This sequence belongs to the methyl-accepting chemotaxis (MCP) protein family.

The protein localises to the cell membrane. Its function is as follows. Chemotactic-signal transducers respond to changes in the concentration of attractants and repellents in the environment, transduce a signal from the outside to the inside of the cell, and facilitate sensory adaptation through the variation of the level of methylation. Attractants increase the level of methylation while repellents decrease the level of methylation. This chain is Chemoreceptor McpA (mcpA), found in Caulobacter vibrioides (strain ATCC 19089 / CIP 103742 / CB 15) (Caulobacter crescentus).